Here is a 165-residue protein sequence, read N- to C-terminus: Lipoprotein signal peptidase (165 aa).

The next 4 membrane-spanning stretches (helical) occupy residues 7–27 (YFSSSSSMLPWLGIAAVLVLL), 46–66 (AVTSFFNLVLVYNKGAAFSFL), 72–92 (WQRYFFTIMGIGAAIFIIYLL), and 100–120 (LFCWALALILGGAIGNVIDRV). Residues Asp-127 and Asp-145 contribute to the active site. A helical transmembrane segment spans residues 136–156 (WHWPAFNIADSAICIGAVLFI).

Belongs to the peptidase A8 family.

The protein localises to the cell inner membrane. The catalysed reaction is Release of signal peptides from bacterial membrane prolipoproteins. Hydrolyzes -Xaa-Yaa-Zaa-|-(S,diacylglyceryl)Cys-, in which Xaa is hydrophobic (preferably Leu), and Yaa (Ala or Ser) and Zaa (Gly or Ala) have small, neutral side chains.. Its pathway is protein modification; lipoprotein biosynthesis (signal peptide cleavage). Functionally, this protein specifically catalyzes the removal of signal peptides from prolipoproteins. This is Lipoprotein signal peptidase from Janthinobacterium sp. (strain Marseille) (Minibacterium massiliensis).